Here is a 344-residue protein sequence, read N- to C-terminus: WW domain binding protein 1-like (344 aa).

A helical membrane pass occupies residues 42-62; that stretch reads LWWFWLVWTIIIILSCCCVCH. 2 disordered regions span residues 132 to 250 and 302 to 321; these read LLPP…RFTG and CLSS…PRPP. A compositionally biased stretch (low complexity) spans 145–173; it reads PGADQPQGSQGAQSSPLSGPSRSSTRPPS. Serine 173 bears the Phosphoserine mark. The segment covering 212-228 has biased composition (basic and acidic residues); the sequence is LDRDSECKEELLKDSSS.

It localises to the membrane. The protein is WW domain binding protein 1-like (Wbp1l) of Rattus norvegicus (Rat).